The chain runs to 362 residues: Chorismate synthase (362 aa).

R46 lines the NADP(+) pocket. Residues 122–124 (RSS), 238–239 (NA), G278, 293–297 (KPTPS), and R319 each bind FMN.

It belongs to the chorismate synthase family. Homotetramer. The cofactor is FMNH2.

It catalyses the reaction 5-O-(1-carboxyvinyl)-3-phosphoshikimate = chorismate + phosphate. Its pathway is metabolic intermediate biosynthesis; chorismate biosynthesis; chorismate from D-erythrose 4-phosphate and phosphoenolpyruvate: step 7/7. Catalyzes the anti-1,4-elimination of the C-3 phosphate and the C-6 proR hydrogen from 5-enolpyruvylshikimate-3-phosphate (EPSP) to yield chorismate, which is the branch point compound that serves as the starting substrate for the three terminal pathways of aromatic amino acid biosynthesis. This reaction introduces a second double bond into the aromatic ring system. The polypeptide is Chorismate synthase (Campylobacter jejuni subsp. jejuni serotype O:2 (strain ATCC 700819 / NCTC 11168)).